A 217-amino-acid polypeptide reads, in one-letter code: Probable transaldolase (217 aa).

Lysine 83 (schiff-base intermediate with substrate) is an active-site residue.

It belongs to the transaldolase family. Type 3B subfamily.

The protein localises to the cytoplasm. The enzyme catalyses D-sedoheptulose 7-phosphate + D-glyceraldehyde 3-phosphate = D-erythrose 4-phosphate + beta-D-fructose 6-phosphate. The protein operates within carbohydrate degradation; pentose phosphate pathway; D-glyceraldehyde 3-phosphate and beta-D-fructose 6-phosphate from D-ribose 5-phosphate and D-xylulose 5-phosphate (non-oxidative stage): step 2/3. Functionally, transaldolase is important for the balance of metabolites in the pentose-phosphate pathway. This chain is Probable transaldolase, found in Caulobacter sp. (strain K31).